A 556-amino-acid chain; its full sequence is Transcription factor IIIB 70 kDa subunit (556 aa).

The TFIIB-type zinc-finger motif lies at 8–41 (SSRKCKNCGSTDFVRDISNTTNELICKVCGLVTE). Residues Cys12, Cys15, Cys33, and Cys36 each contribute to the Zn(2+) site. 2 consecutive repeat copies span residues 98–174 (LKAV…TFLK) and 193–272 (IQHF…RLNE). Positions 98–272 (LKAVSYALNI…EETLQQRLNE (175 aa)) are interaction with TBP and with the Pol III subunit C34. Residues 284 to 556 (KEFRDDETEV…DAINGLFGQK (273 aa)) form an interaction with TBP region. Disordered stretches follow at residues 287 to 309 (RDDETEVNEGERSAESKPPSFDK) and 477 to 501 (ADLASGNTSLRKKRSKRTNRNQSSA). The span at 295 to 309 (EGERSAESKPPSFDK) shows a compositional bias: basic and acidic residues. Residues 486–495 (LRKKRSKRTN) show a composition bias toward basic residues.

This sequence belongs to the TFIIB family. As to quaternary structure, TFIIIB comprises the TATA-binding protein (TBP), the B-related factor (BRF) and a 70 kDa polypeptide.

Its subcellular location is the nucleus. General activator of RNA polymerase III transcription. Interacts with TBP. Binds to Pol III subunit C34 and to the TAU135 component of TFIIIC. The polypeptide is Transcription factor IIIB 70 kDa subunit (TDS4) (Kluyveromyces lactis (strain ATCC 8585 / CBS 2359 / DSM 70799 / NBRC 1267 / NRRL Y-1140 / WM37) (Yeast)).